The sequence spans 355 residues: Phosphoserine aminotransferase (355 aa).

Residue arginine 41 coordinates L-glutamate. Pyridoxal 5'-phosphate-binding positions include 75–76 (AS), tryptophan 99, threonine 147, aspartate 166, and glutamine 189. Lysine 190 carries the N6-(pyridoxal phosphate)lysine modification. Residue 231-232 (NT) participates in pyridoxal 5'-phosphate binding.

It belongs to the class-V pyridoxal-phosphate-dependent aminotransferase family. SerC subfamily. In terms of assembly, homodimer. The cofactor is pyridoxal 5'-phosphate.

It is found in the cytoplasm. It carries out the reaction O-phospho-L-serine + 2-oxoglutarate = 3-phosphooxypyruvate + L-glutamate. It catalyses the reaction 4-(phosphooxy)-L-threonine + 2-oxoglutarate = (R)-3-hydroxy-2-oxo-4-phosphooxybutanoate + L-glutamate. Its pathway is amino-acid biosynthesis; L-serine biosynthesis; L-serine from 3-phospho-D-glycerate: step 2/3. It functions in the pathway cofactor biosynthesis; pyridoxine 5'-phosphate biosynthesis; pyridoxine 5'-phosphate from D-erythrose 4-phosphate: step 3/5. Functionally, catalyzes the reversible conversion of 3-phosphohydroxypyruvate to phosphoserine and of 3-hydroxy-2-oxo-4-phosphonooxybutanoate to phosphohydroxythreonine. The protein is Phosphoserine aminotransferase of Parabacteroides distasonis (strain ATCC 8503 / DSM 20701 / CIP 104284 / JCM 5825 / NCTC 11152).